The following is a 365-amino-acid chain: Alanine racemase (365 aa).

Lysine 35 acts as the Proton acceptor; specific for D-alanine in catalysis. At lysine 35 the chain carries N6-(pyridoxal phosphate)lysine. Residue arginine 130 coordinates substrate. The active-site Proton acceptor; specific for L-alanine is tyrosine 256. Residue methionine 304 coordinates substrate.

The protein belongs to the alanine racemase family. Pyridoxal 5'-phosphate serves as cofactor.

It carries out the reaction L-alanine = D-alanine. It functions in the pathway amino-acid biosynthesis; D-alanine biosynthesis; D-alanine from L-alanine: step 1/1. Catalyzes the interconversion of L-alanine and D-alanine. May also act on other amino acids. In Acidovorax sp. (strain JS42), this protein is Alanine racemase (alr).